We begin with the raw amino-acid sequence, 478 residues long: F-box/kelch-repeat protein At1g51550 (478 aa).

Residues 1–20 form a disordered region; the sequence is MAAESTRNSSPPSTSQSSSP. The segment covering 9 to 20 has biased composition (low complexity); that stretch reads SSPPSTSQSSSP. The region spanning 18–64 is the F-box domain; it reads SSPIINLPDDHLLTILLLLPVDSILSFSMTCKRYKSLACSDSLWEAL. Kelch repeat units lie at residues 135–187 and 246–299; these read LVLF…VIGE and KMVV…CIRE.

In Arabidopsis thaliana (Mouse-ear cress), this protein is F-box/kelch-repeat protein At1g51550.